The chain runs to 198 residues: Holliday junction resolvase RecU (198 aa).

Residues 1-29 (MIRYPNGKSYQPKTAASSLQKKPSYSNRG) form a disordered region. The segment covering 8–29 (KSYQPKTAASSLQKKPSYSNRG) has biased composition (polar residues). Residues Thr83, Asp85, Glu98, and Gln117 each coordinate Mg(2+).

Belongs to the RecU family. Requires Mg(2+) as cofactor.

Its subcellular location is the cytoplasm. The catalysed reaction is Endonucleolytic cleavage at a junction such as a reciprocal single-stranded crossover between two homologous DNA duplexes (Holliday junction).. Its function is as follows. Endonuclease that resolves Holliday junction intermediates in genetic recombination. Cleaves mobile four-strand junctions by introducing symmetrical nicks in paired strands. Promotes annealing of linear ssDNA with homologous dsDNA. Required for DNA repair, homologous recombination and chromosome segregation. The protein is Holliday junction resolvase RecU of Bacillus licheniformis (strain ATCC 14580 / DSM 13 / JCM 2505 / CCUG 7422 / NBRC 12200 / NCIMB 9375 / NCTC 10341 / NRRL NRS-1264 / Gibson 46).